The following is a 359-amino-acid chain: Mannose-1-phosphate guanylyltransferase (359 aa).

It belongs to the transferase hexapeptide repeat family.

The catalysed reaction is alpha-D-mannose 1-phosphate + GTP + H(+) = GDP-alpha-D-mannose + diphosphate. The protein operates within cell wall biogenesis. It functions in the pathway nucleotide-sugar biosynthesis; GDP-alpha-D-mannose biosynthesis; GDP-alpha-D-mannose from alpha-D-mannose 1-phosphate (GTP route): step 1/1. Catalyzes the formation of GDP-mannose from D-mannose-1-phosphate and GTP. Plays an important role in the synthesis of different glycoconjugates which are responsible for cell wall structure, virulence and immunomodulatory activity of M.tuberculosis. This Mycobacterium tuberculosis (strain ATCC 25618 / H37Rv) protein is Mannose-1-phosphate guanylyltransferase.